The primary structure comprises 189 residues: Peptidyl-tRNA hydrolase (189 aa).

Tyr15 is a tRNA binding site. Residue His20 is the Proton acceptor of the active site. The tRNA site is built by Tyr65, Asn67, and Asn113.

The protein belongs to the PTH family. In terms of assembly, monomer.

It localises to the cytoplasm. It carries out the reaction an N-acyl-L-alpha-aminoacyl-tRNA + H2O = an N-acyl-L-amino acid + a tRNA + H(+). Hydrolyzes ribosome-free peptidyl-tRNAs (with 1 or more amino acids incorporated), which drop off the ribosome during protein synthesis, or as a result of ribosome stalling. Its function is as follows. Catalyzes the release of premature peptidyl moieties from peptidyl-tRNA molecules trapped in stalled 50S ribosomal subunits, and thus maintains levels of free tRNAs and 50S ribosomes. This is Peptidyl-tRNA hydrolase from Caldicellulosiruptor bescii (strain ATCC BAA-1888 / DSM 6725 / KCTC 15123 / Z-1320) (Anaerocellum thermophilum).